A 146-amino-acid chain; its full sequence is Large ribosomal subunit protein uL16 (146 aa).

This sequence belongs to the universal ribosomal protein uL16 family. Part of the 50S ribosomal subunit.

Binds 23S rRNA and is also seen to make contacts with the A and possibly P site tRNAs. This chain is Large ribosomal subunit protein uL16, found in Caulobacter sp. (strain K31).